The chain runs to 540 residues: Pentatricopeptide repeat-containing protein At3g29290 (540 aa).

12 PPR repeats span residues 106-140 (NEET…GLQP), 141-175 (NAHA…ENVT), 177-205 (HTYS…LERE), 213-247 (DVVL…GHIG), 248-282 (TEIT…KISL), 283-317 (REDA…GMKP), 318-352 (NLVA…GHKP), 353-387 (DEYT…NLCC), 389-423 (NEYL…GLTV), 424-458 (STSS…DCKP), 459-487 (NTFT…KKVE), and 489-523 (DVSL…GLEP).

Belongs to the PPR family. P subfamily.

This Arabidopsis thaliana (Mouse-ear cress) protein is Pentatricopeptide repeat-containing protein At3g29290 (EMB2076).